A 210-amino-acid chain; its full sequence is MRVHVADHPLITHKLSVLRNKETPAPTFRALTEELVTLLAYEATRAVRVEPVEIETPVTSTRGVTISEPRPLVVPILRAGLGMLEGMVSLMPTAEVGFLGMARNEETFEPTTYAERLPMDLSERQCFVLDPMLATGGSLGAAIDFLFKRNAVDVTAICILAAPEGLAALEKATEGRDVTIVLGALDERLNENGYIVPGLGDAGDRLYGTV.

5-phospho-alpha-D-ribose 1-diphosphate-binding positions include Arg78, Arg103, and 130–138 (DPMLATGGS). Uracil-binding positions include Ile195 and 200–202 (GDA). Residue Asp201 coordinates 5-phospho-alpha-D-ribose 1-diphosphate.

Belongs to the UPRTase family. Requires Mg(2+) as cofactor.

It catalyses the reaction UMP + diphosphate = 5-phospho-alpha-D-ribose 1-diphosphate + uracil. It participates in pyrimidine metabolism; UMP biosynthesis via salvage pathway; UMP from uracil: step 1/1. With respect to regulation, allosterically activated by GTP. Its function is as follows. Catalyzes the conversion of uracil and 5-phospho-alpha-D-ribose 1-diphosphate (PRPP) to UMP and diphosphate. This chain is Uracil phosphoribosyltransferase, found in Leifsonia xyli subsp. xyli (strain CTCB07).